We begin with the raw amino-acid sequence, 302 residues long: MIFPNIDPIVHIGPWALQWGPLALRWYALAYVVGILLGWRYAVMLVRDAKLWGGHKPTATPLQIDDLVLWITLGIILGGRIGYVLFYMMLNEGQRAGLAEHPFDVFKIWEGGMSFHGGFLGVCAAIVLFARQQKIDMLKLGDLIAPVAPIGLFFGRCANFINGELWGRETTHPWGMIFCNETIQKANQGGCPAGHLPRHPSQLYEAALEGVLLFLILNFAAHKLKWLQRRGALVATFLICYGLFRVSLEGVRNPDHGMPNFPLGLTMGMILSIPMLAVGVWLLWRALREPVPPPLAEDHEPA.

Transmembrane regions (helical) follow at residues 26–46 (WYAL…VMLV), 67–87 (LVLW…VLFY), and 108–128 (IWEG…AIVL). R156 is a binding site for a 1,2-diacyl-sn-glycero-3-phospho-(1'-sn-glycerol). Transmembrane regions (helical) follow at residues 231–251 (GALV…LEGV) and 263–283 (LGLT…VWLL).

It belongs to the Lgt family.

It localises to the cell inner membrane. The catalysed reaction is L-cysteinyl-[prolipoprotein] + a 1,2-diacyl-sn-glycero-3-phospho-(1'-sn-glycerol) = an S-1,2-diacyl-sn-glyceryl-L-cysteinyl-[prolipoprotein] + sn-glycerol 1-phosphate + H(+). Its pathway is protein modification; lipoprotein biosynthesis (diacylglyceryl transfer). Its function is as follows. Catalyzes the transfer of the diacylglyceryl group from phosphatidylglycerol to the sulfhydryl group of the N-terminal cysteine of a prolipoprotein, the first step in the formation of mature lipoproteins. The polypeptide is Phosphatidylglycerol--prolipoprotein diacylglyceryl transferase (Caulobacter sp. (strain K31)).